A 118-amino-acid chain; its full sequence is ATP synthase subunit g, mitochondrial (118 aa).

F-type ATP synthases have 2 components, the catalytic core F(1) and the membrane-embedded component F(0), linked together by a central stalk and a peripheral stalk. The central stalk, also called rotor shaft, is often seen as part of F(1). The peripheral stalk is seen as part of F(0). F(0) contains the membrane channel next to the rotor. F-type ATP synthases form dimers but each monomer functions independently in ATP generation. The dimer consists of 18 different polypeptides: ATP1 (subunit alpha, part of F(1), 3 molecules per monomer), ATP2 (subunit beta, part of F(1), 3 molecules per monomer), ATP3 (subunit gamma, part of the central stalk), ATP4 (subunit b, part of the peripheral stalk), ATP5/OSCP (subunit 5/OSCP, part of the peripheral stalk), ATP6 (subunit a, part of the peripheral stalk), ATP7 (subunit d, part of the peripheral stalk), ATP8 (subunit 8, part of the peripheral stalk), OLI1 (subunit c, part of the rotor, 10 molecules per monomer), ATP14 (subunit h, part of the peripheral stalk), ATP15 (subunit epsilon, part of the central stalk), ATP16 (subunit delta, part of the central stalk), ATP17 (subunit f, part of the peripheral stalk), ATP18 (subunit i/j, part of the peripheral stalk). Dimer-specific subunits are ATP19 (subunit k, at interface between monomers), ATP20 (subunit g, at interface between monomers), TIM11 (subunit e, at interface between monomers). Also contains subunit L.

Its subcellular location is the mitochondrion inner membrane. Its function is as follows. Mitochondrial membrane ATP synthase (F(1)F(0) ATP synthase or Complex V) produces ATP from ADP in the presence of a proton gradient across the membrane which is generated by electron transport complexes of the respiratory chain. F-type ATP synthases consist of two structural domains, F(1) - containing the extramembraneous catalytic core, and F(0) - containing the membrane proton channel, linked together by a central stalk and a peripheral stalk. During catalysis, ATP synthesis in the catalytic domain of F(1) is coupled via a rotary mechanism of the central stalk subunits to proton translocation. Part of the complex F(0) domain Minor subunit located with subunit a/ATP6 in the membrane. Together with subunit e/TIM11, probably contributes to membrane curvature at the site of the ATP synthase dimer, ultimately contributing to formation of cristae. This Pichia angusta (Yeast) protein is ATP synthase subunit g, mitochondrial.